We begin with the raw amino-acid sequence, 161 residues long: Phosphopantetheine adenylyltransferase (161 aa).

S11 lines the substrate pocket. ATP-binding positions include S11–F12 and H19. Residues K43, L75, and R89 each contribute to the substrate site. ATP contacts are provided by residues G90–R92, E100, and Y125–S131.

The protein belongs to the bacterial CoaD family. In terms of assembly, homohexamer. Requires Mg(2+) as cofactor.

Its subcellular location is the cytoplasm. The catalysed reaction is (R)-4'-phosphopantetheine + ATP + H(+) = 3'-dephospho-CoA + diphosphate. It participates in cofactor biosynthesis; coenzyme A biosynthesis; CoA from (R)-pantothenate: step 4/5. Its function is as follows. Reversibly transfers an adenylyl group from ATP to 4'-phosphopantetheine, yielding dephospho-CoA (dPCoA) and pyrophosphate. In Geotalea daltonii (strain DSM 22248 / JCM 15807 / FRC-32) (Geobacter daltonii), this protein is Phosphopantetheine adenylyltransferase.